The following is a 313-amino-acid chain: Ankyrin repeat family A protein 2 (313 aa).

ANK repeat units follow at residues 148–180, 181–213, 214–246, 247–279, and 280–313; these read ANSL…HTDE, EGFT…LLGK, GRES…EYDW, NGGT…IETD, and SGYN…NIKE.

In terms of assembly, interacts (via ANK repeats) with CCDC8 (via PxLPxI/L motif); mediates the interaction with the 3M complex which is composed of CCDC8, CUL7 and OBSL1. Interacts (via ANK repeats) with HDAC4 (via PxLPxI/L motif). Interacts (via ANK repeats) with HDAC5 (via PxLPxI/L motif). Interacts (via ANK repeats) with LRP2/megalin (via PxLPxI/L motif). Interacts (via ANK repeats) with RFX7 (via PxLPxI/L motif). Interacts with AHRR. Interacts with NEK6.

The protein localises to the cytoplasm. It is found in the cytoskeleton. It localises to the membrane. Its function is as follows. May regulate the interaction between the 3M complex and the histone deacetylases HDAC4 and HDAC5. May also regulate LRP2/megalin. In Bos taurus (Bovine), this protein is Ankyrin repeat family A protein 2 (ANKRA2).